A 498-amino-acid polypeptide reads, in one-letter code: tRNA-2-methylthio-N(6)-dimethylallyladenosine synthase (498 aa).

An MTTase N-terminal domain is found at P2–I118. Positions 11, 47, 81, 163, 167, and 170 each coordinate [4Fe-4S] cluster. The 245-residue stretch at P149–A393 folds into the Radical SAM core domain. Positions S396–E467 constitute a TRAM domain. A disordered region spans residues A469–G498.

The protein belongs to the methylthiotransferase family. MiaB subfamily. Monomer. [4Fe-4S] cluster is required as a cofactor.

The protein localises to the cytoplasm. The enzyme catalyses N(6)-dimethylallyladenosine(37) in tRNA + (sulfur carrier)-SH + AH2 + 2 S-adenosyl-L-methionine = 2-methylsulfanyl-N(6)-dimethylallyladenosine(37) in tRNA + (sulfur carrier)-H + 5'-deoxyadenosine + L-methionine + A + S-adenosyl-L-homocysteine + 2 H(+). Functionally, catalyzes the methylthiolation of N6-(dimethylallyl)adenosine (i(6)A), leading to the formation of 2-methylthio-N6-(dimethylallyl)adenosine (ms(2)i(6)A) at position 37 in tRNAs that read codons beginning with uridine. The chain is tRNA-2-methylthio-N(6)-dimethylallyladenosine synthase from Sorangium cellulosum (strain So ce56) (Polyangium cellulosum (strain So ce56)).